The primary structure comprises 305 residues: Ornithine carbamoyltransferase (305 aa).

Carbamoyl phosphate contacts are provided by residues 47–50 (STRT), R98, and 125–128 (HPCQ). L-ornithine is bound by residues N156, D221, and 225-226 (SM). Carbamoyl phosphate contacts are provided by residues 262–263 (CL) and R290.

Belongs to the aspartate/ornithine carbamoyltransferase superfamily. OTCase family.

Its subcellular location is the cytoplasm. It carries out the reaction carbamoyl phosphate + L-ornithine = L-citrulline + phosphate + H(+). The protein operates within amino-acid biosynthesis; L-arginine biosynthesis; L-arginine from L-ornithine and carbamoyl phosphate: step 1/3. Reversibly catalyzes the transfer of the carbamoyl group from carbamoyl phosphate (CP) to the N(epsilon) atom of ornithine (ORN) to produce L-citrulline. The protein is Ornithine carbamoyltransferase of Methanococcus vannielii (strain ATCC 35089 / DSM 1224 / JCM 13029 / OCM 148 / SB).